The primary structure comprises 97 residues: Citrate lyase acyl carrier protein 2 (97 aa).

Serine 14 is subject to O-(phosphoribosyl dephospho-coenzyme A)serine.

This sequence belongs to the CitD family. Oligomer with a subunit composition of (alpha,beta,gamma)6.

The protein localises to the cytoplasm. Its function is as follows. Covalent carrier of the coenzyme of citrate lyase. In Salmonella paratyphi A (strain ATCC 9150 / SARB42), this protein is Citrate lyase acyl carrier protein 2.